Consider the following 323-residue polypeptide: Lipoyl synthase (323 aa).

[4Fe-4S] cluster contacts are provided by cysteine 53, cysteine 58, cysteine 64, cysteine 79, cysteine 83, cysteine 86, and serine 293. One can recognise a Radical SAM core domain in the interval 65–282; that stretch reads WTKKQATVMI…AATARAKGFS (218 aa).

It belongs to the radical SAM superfamily. Lipoyl synthase family. [4Fe-4S] cluster serves as cofactor.

Its subcellular location is the cytoplasm. It catalyses the reaction [[Fe-S] cluster scaffold protein carrying a second [4Fe-4S](2+) cluster] + N(6)-octanoyl-L-lysyl-[protein] + 2 oxidized [2Fe-2S]-[ferredoxin] + 2 S-adenosyl-L-methionine + 4 H(+) = [[Fe-S] cluster scaffold protein] + N(6)-[(R)-dihydrolipoyl]-L-lysyl-[protein] + 4 Fe(3+) + 2 hydrogen sulfide + 2 5'-deoxyadenosine + 2 L-methionine + 2 reduced [2Fe-2S]-[ferredoxin]. It participates in protein modification; protein lipoylation via endogenous pathway; protein N(6)-(lipoyl)lysine from octanoyl-[acyl-carrier-protein]: step 2/2. Catalyzes the radical-mediated insertion of two sulfur atoms into the C-6 and C-8 positions of the octanoyl moiety bound to the lipoyl domains of lipoate-dependent enzymes, thereby converting the octanoylated domains into lipoylated derivatives. In Zymomonas mobilis subsp. mobilis (strain ATCC 31821 / ZM4 / CP4), this protein is Lipoyl synthase.